Reading from the N-terminus, the 198-residue chain is Imidazoleglycerol-phosphate dehydratase (198 aa).

It belongs to the imidazoleglycerol-phosphate dehydratase family.

Its subcellular location is the cytoplasm. The enzyme catalyses D-erythro-1-(imidazol-4-yl)glycerol 3-phosphate = 3-(imidazol-4-yl)-2-oxopropyl phosphate + H2O. It functions in the pathway amino-acid biosynthesis; L-histidine biosynthesis; L-histidine from 5-phospho-alpha-D-ribose 1-diphosphate: step 6/9. This chain is Imidazoleglycerol-phosphate dehydratase, found in Agrobacterium fabrum (strain C58 / ATCC 33970) (Agrobacterium tumefaciens (strain C58)).